The primary structure comprises 419 residues: Dynein regulatory complex protein 9 (419 aa).

2 disordered regions span residues M1–V47 and S393–K419. The segment covering E34–S44 has biased composition (acidic residues). In terms of domain architecture, IQ spans E371–E400.

The protein belongs to the DRC9 family. Component of the nexin-dynein regulatory complex (N-DRC). Interacts (via IQ domain) with CALM when calcium levels are low. Does not interact with CALM in the presence of Ca(2+). Interacts with the HSP70 proteins HSPA1L and HSPA8. May form a complex with CAMK4 and HSP70.

Its subcellular location is the cytoplasm. The protein localises to the cell projection. The protein resides in the cilium. It localises to the flagellum. It is found in the cytoskeleton. Its subcellular location is the flagellum axoneme. Component of the nexin-dynein regulatory complex (N-DRC), a key regulator of ciliary/flagellar motility which maintains the alignment and integrity of the distal axoneme and regulates microtubule sliding in motile axonemes. Binds calmodulin when cellular Ca(2+) levels are low and thereby contributes to the regulation of calcium and calmodulin-dependent protein kinase IV (CAMK4) activity; contributes to the regulation of CAMK4 signaling cascades. Required for normal axoneme assembly in sperm flagella, normal sperm tail formation and for male fertility. The chain is Dynein regulatory complex protein 9 (Iqcg) from Rattus norvegicus (Rat).